The following is a 332-amino-acid chain: Protein pelota homolog (332 aa).

This sequence belongs to the eukaryotic release factor 1 family. Pelota subfamily. Monomer. A divalent metal cation serves as cofactor.

Its subcellular location is the cytoplasm. May function in recognizing stalled ribosomes, interact with stem-loop structures in stalled mRNA molecules, and effect endonucleolytic cleavage of the mRNA. May play a role in the release non-functional ribosomes and degradation of damaged mRNAs. Has endoribonuclease activity. This is Protein pelota homolog from Pyrobaculum calidifontis (strain DSM 21063 / JCM 11548 / VA1).